The chain runs to 312 residues: Malate dehydrogenase (312 aa).

NAD(+)-binding positions include 7–13 and D34; that span reads GAAGGIG. Substrate contacts are provided by R81 and R87. Residues N94 and 117 to 119 each bind NAD(+); that span reads ITN. Substrate is bound by residues N119 and R153. Residue H177 is the Proton acceptor of the active site. An NAD(+)-binding site is contributed by M228.

This sequence belongs to the LDH/MDH superfamily. MDH type 1 family. Homodimer.

It carries out the reaction (S)-malate + NAD(+) = oxaloacetate + NADH + H(+). Its function is as follows. Catalyzes the reversible oxidation of malate to oxaloacetate. This chain is Malate dehydrogenase, found in Mannheimia succiniciproducens (strain KCTC 0769BP / MBEL55E).